Here is a 190-residue protein sequence, read N- to C-terminus: Endoribonuclease YbeY (190 aa).

Residues His147, His151, and His157 each contribute to the Zn(2+) site.

The protein belongs to the endoribonuclease YbeY family. Zn(2+) serves as cofactor.

The protein localises to the cytoplasm. Single strand-specific metallo-endoribonuclease involved in late-stage 70S ribosome quality control and in maturation of the 3' terminus of the 16S rRNA. The chain is Endoribonuclease YbeY from Nitrobacter winogradskyi (strain ATCC 25391 / DSM 10237 / CIP 104748 / NCIMB 11846 / Nb-255).